Reading from the N-terminus, the 89-residue chain is MSRSLKKGPYINVKLEKKVLAMNESGKKVVVKTWARASMISPDFVGHTVAVHNGNKFIPVYVTENMVGHKLGEFAPTRTFRGHAGNKKK.

It belongs to the universal ribosomal protein uS19 family.

Functionally, protein S19 forms a complex with S13 that binds strongly to the 16S ribosomal RNA. The chain is Small ribosomal subunit protein uS19 from Phocaeicola vulgatus (strain ATCC 8482 / DSM 1447 / JCM 5826 / CCUG 4940 / NBRC 14291 / NCTC 11154) (Bacteroides vulgatus).